Consider the following 303-residue polypeptide: Trans-aconitate 2-methyltransferase (303 aa).

A disordered region spans residues 271–303 (EGSGGSGGSGGSAGSAGCAGSGGSVGPAGEAGR). Positions 272–303 (GSGGSGGSGGSAGSAGCAGSGGSVGPAGEAGR) are enriched in gly residues.

The protein belongs to the methyltransferase superfamily. Tam family.

The protein localises to the cytoplasm. It carries out the reaction trans-aconitate + S-adenosyl-L-methionine = (E)-3-(methoxycarbonyl)pent-2-enedioate + S-adenosyl-L-homocysteine. Functionally, catalyzes the S-adenosylmethionine monomethyl esterification of trans-aconitate. The polypeptide is Trans-aconitate 2-methyltransferase (Streptomyces coelicolor (strain ATCC BAA-471 / A3(2) / M145)).